Reading from the N-terminus, the 905-residue chain is Probable aromatic-L-amino-acid decarboxylase (905 aa).

A disordered region spans residues 250–296 (YLNPIIKTPPHNERVPKMKTNISKTRKKKGKVSDASKDSRPSETKKE). The segment covering 280 to 296 (KVSDASKDSRPSETKKE) has biased composition (basic and acidic residues). Pyridoxal 5'-phosphate-binding residues include T492 and S591. K648 is modified (N6-(pyridoxal phosphate)lysine). Positions 861-905 (HTAEYADPPGKSNKSPQVAAKGELPSAAPPSSRTPNSDISEKSDR) are disordered. Positions 889–898 (PPSSRTPNSD) are enriched in polar residues.

The protein belongs to the group II decarboxylase family. Homodimer. Requires pyridoxal 5'-phosphate as cofactor.

The enzyme catalyses L-dopa + H(+) = dopamine + CO2. It catalyses the reaction 5-hydroxy-L-tryptophan + H(+) = serotonin + CO2. It functions in the pathway catecholamine biosynthesis; dopamine biosynthesis; dopamine from L-tyrosine: step 2/2. Catalyzes the decarboxylation of L-3,4-dihydroxyphenylalanine (DOPA) to dopamine, L-5-hydroxytryptophan to serotonin and L-tryptophan to tryptamine. The sequence is that of Probable aromatic-L-amino-acid decarboxylase (hdl-1) from Caenorhabditis elegans.